Reading from the N-terminus, the 215-residue chain is UPF0502 protein CKO_01995 (215 aa).

This sequence belongs to the UPF0502 family.

The chain is UPF0502 protein CKO_01995 from Citrobacter koseri (strain ATCC BAA-895 / CDC 4225-83 / SGSC4696).